Reading from the N-terminus, the 187-residue chain is Peptidyl-tRNA hydrolase (187 aa).

Tyrosine 14 provides a ligand contact to tRNA. The active-site Proton acceptor is histidine 19. TRNA is bound by residues tyrosine 60, asparagine 62, and asparagine 108.

Belongs to the PTH family. In terms of assembly, monomer.

Its subcellular location is the cytoplasm. The catalysed reaction is an N-acyl-L-alpha-aminoacyl-tRNA + H2O = an N-acyl-L-amino acid + a tRNA + H(+). In terms of biological role, hydrolyzes ribosome-free peptidyl-tRNAs (with 1 or more amino acids incorporated), which drop off the ribosome during protein synthesis, or as a result of ribosome stalling. Its function is as follows. Catalyzes the release of premature peptidyl moieties from peptidyl-tRNA molecules trapped in stalled 50S ribosomal subunits, and thus maintains levels of free tRNAs and 50S ribosomes. The protein is Peptidyl-tRNA hydrolase of Mycoplasmopsis synoviae (strain 53) (Mycoplasma synoviae).